We begin with the raw amino-acid sequence, 237 residues long: Phosphoribosylaminoimidazole-succinocarboxamide synthase (237 aa).

Belongs to the SAICAR synthetase family.

The enzyme catalyses 5-amino-1-(5-phospho-D-ribosyl)imidazole-4-carboxylate + L-aspartate + ATP = (2S)-2-[5-amino-1-(5-phospho-beta-D-ribosyl)imidazole-4-carboxamido]succinate + ADP + phosphate + 2 H(+). It participates in purine metabolism; IMP biosynthesis via de novo pathway; 5-amino-1-(5-phospho-D-ribosyl)imidazole-4-carboxamide from 5-amino-1-(5-phospho-D-ribosyl)imidazole-4-carboxylate: step 1/2. The chain is Phosphoribosylaminoimidazole-succinocarboxamide synthase from Baumannia cicadellinicola subsp. Homalodisca coagulata.